A 119-amino-acid chain; its full sequence is Holo-[acyl-carrier-protein] synthase (119 aa).

Residues D8 and E58 each coordinate Mg(2+).

This sequence belongs to the P-Pant transferase superfamily. AcpS family. Mg(2+) is required as a cofactor.

The protein resides in the cytoplasm. The catalysed reaction is apo-[ACP] + CoA = holo-[ACP] + adenosine 3',5'-bisphosphate + H(+). In terms of biological role, transfers the 4'-phosphopantetheine moiety from coenzyme A to a Ser of acyl-carrier-protein. In Bacillus cereus (strain B4264), this protein is Holo-[acyl-carrier-protein] synthase.